Consider the following 318-residue polypeptide: MNNRRKIVVIGASNVGSAVANKIADFQLATEVVLIDLNEDKAWGEAKDSSHATSCIYSTNIKFHLGDYEDCKDANIIVITAGPSIRPGETPDRLKLAGTNAKIMSSVMGEIVKRTKEAMIIMITNPLDVATYVVSTQFDYPRNLILGTGTMLETYRFRRILADKYQVDPKNINGYVLGEHGNAAFVAWSTTGCAGFPIDDLDEYFHRTEKLSHEAVEQELVQVAYDVINKKGFTNTGIAMAACRFIKSVLYDEHTILPCSAVLEGEYGIKDVALSIPRMVCADGIMRSFEVHLTDDELEKMHKAAQSVRSALDGAGIK.

Position 13–41 (13–41 (SNVGSAVANKIADFQLATEVVLIDLNEDK)) interacts with NAD(+). Residues R93, N125, and R156 each contribute to the substrate site. N125 is an NAD(+) binding site. H180 acts as the Proton acceptor in catalysis. Residue Y225 is modified to Phosphotyrosine. T234 lines the substrate pocket.

The protein belongs to the LDH/MDH superfamily. LDH family. In terms of assembly, homotetramer.

The protein resides in the cytoplasm. It carries out the reaction (S)-lactate + NAD(+) = pyruvate + NADH + H(+). Its pathway is fermentation; pyruvate fermentation to lactate; (S)-lactate from pyruvate: step 1/1. This chain is L-lactate dehydrogenase (ldh), found in Selenomonas ruminantium.